The primary structure comprises 324 residues: MKPSIILYKTLPDDLLHRLEAHFTVTQVPNLHPETVAQHAQAFASAQGLLGASETVNRALLEKMPALRAASTISVGYDNVEVDALTARKIVLMHTPAVLTETVADTVMALMLATARRVVDVAERVKAGEWTESIGPAWFGVDVHHKTLGIVGMGRIGMALAQRAHFGFTMPVLYHARRRHQEAEDRFNARYCDLDTLLQEADFVCVILPLTAETRHLFGATQFARMKSSAIFINAGRGPVVDENALIAALQNGEIYAAGLDVFEQEPLSVDSPLLNMSNVVAVPHIGSATHETRYNMMACAVDNLIDALQGKIEKNCVNPQAAG.

Active-site residues include arginine 237 and glutamate 266. Catalysis depends on histidine 285, which acts as the Proton donor.

Belongs to the D-isomer specific 2-hydroxyacid dehydrogenase family. GhrB subfamily. In terms of assembly, homodimer.

The protein resides in the cytoplasm. The enzyme catalyses glycolate + NADP(+) = glyoxylate + NADPH + H(+). It catalyses the reaction (R)-glycerate + NAD(+) = 3-hydroxypyruvate + NADH + H(+). The catalysed reaction is (R)-glycerate + NADP(+) = 3-hydroxypyruvate + NADPH + H(+). Functionally, catalyzes the NADPH-dependent reduction of glyoxylate and hydroxypyruvate into glycolate and glycerate, respectively. In Salmonella heidelberg (strain SL476), this protein is Glyoxylate/hydroxypyruvate reductase B.